The following is a 459-amino-acid chain: Argininosuccinate lyase (459 aa).

It belongs to the lyase 1 family. Argininosuccinate lyase subfamily.

It is found in the cytoplasm. It catalyses the reaction 2-(N(omega)-L-arginino)succinate = fumarate + L-arginine. It participates in amino-acid biosynthesis; L-arginine biosynthesis; L-arginine from L-ornithine and carbamoyl phosphate: step 3/3. The chain is Argininosuccinate lyase from Geobacillus kaustophilus (strain HTA426).